Consider the following 430-residue polypeptide: 3-deoxy-D-manno-octulosonic acid transferase (430 aa).

The chain crosses the membrane as a helical; Signal-anchor span at residues 12 to 32; the sequence is AFLVAAFLAAAPRIFYKVVFH. The active-site Proton acceptor is Glu66. CMP-binding positions include 274–275, 314–316, and 341–344; these read PR, MGI, and NLLE.

This sequence belongs to the glycosyltransferase group 1 family. Glycosyltransferase 30 subfamily.

The protein resides in the cell inner membrane. It catalyses the reaction lipid IVA (E. coli) + CMP-3-deoxy-beta-D-manno-octulosonate = alpha-Kdo-(2-&gt;6)-lipid IVA (E. coli) + CMP + H(+). The catalysed reaction is alpha-Kdo-(2-&gt;6)-lipid IVA (E. coli) + CMP-3-deoxy-beta-D-manno-octulosonate = alpha-Kdo-(2-&gt;4)-alpha-Kdo-(2-&gt;6)-lipid IVA (E. coli) + CMP + H(+). It carries out the reaction alpha-Kdo-(2-&gt;4)-alpha-Kdo-(2-&gt;6)-lipid IVA (E. coli) + CMP-3-deoxy-beta-D-manno-octulosonate = alpha-Kdo-(2-&gt;8)-alpha-Kdo-(2-&gt;4)-alpha-Kdo-(2-&gt;6)-lipid IVA (E. coli) + CMP + H(+). Its pathway is bacterial outer membrane biogenesis; LPS core biosynthesis. Involved in lipopolysaccharide (LPS) biosynthesis. Catalyzes the transfer of three 3-deoxy-D-manno-octulosonate (Kdo) residues from CMP-Kdo to lipid IV(A), the tetraacyldisaccharide-1,4'-bisphosphate precursor of lipid A. Thus generates the genus-specific LPS epitope of Chlamydia, composed of the trisaccharide alpha-Kdo-(2-&gt;8)-alpha-Kdo-(2-&gt;4)-alpha-Kdo. This chain is 3-deoxy-D-manno-octulosonic acid transferase (waaA), found in Chlamydia muridarum (strain MoPn / Nigg).